The primary structure comprises 450 residues: TNF receptor-associated factor family protein DDB_G0273433/DDB_G0273509 (450 aa).

Residues 26 to 73 (CQICFNSVIDFKKETLSFDVLQCRNGHISCHECWNRQLSIKQECPSCK) form an RING-type; degenerate zinc finger. TRAF-type zinc fingers lie at residues 129–185 (HHLK…KKLN) and 186–243 (KHIE…SQLS). Residues 257–297 (QNVMDLHKLQLDECNQDYRKLEKQNRDLEKRLFYLESTVNS) are a coiled coil. The MATH domain occupies 319 to 439 (VYKGKWVINN…NNSLTISISI (121 aa)).

Belongs to the TNF receptor-associated factor family. A subfamily.

The protein localises to the cytoplasm. Probable adapter protein and signal transducer that links members of the tumor necrosis factor receptor family to different signaling pathways by association with the receptor cytoplasmic domain and kinases. This is TNF receptor-associated factor family protein DDB_G0273433/DDB_G0273509 from Dictyostelium discoideum (Social amoeba).